We begin with the raw amino-acid sequence, 100 residues long: Urease subunit gamma (100 aa).

It belongs to the urease gamma subunit family. Heterotrimer of UreA (gamma), UreB (beta) and UreC (alpha) subunits. Three heterotrimers associate to form the active enzyme.

It is found in the cytoplasm. It carries out the reaction urea + 2 H2O + H(+) = hydrogencarbonate + 2 NH4(+). Its pathway is nitrogen metabolism; urea degradation; CO(2) and NH(3) from urea (urease route): step 1/1. The chain is Urease subunit gamma from Kocuria rhizophila (strain ATCC 9341 / DSM 348 / NBRC 103217 / DC2201).